The primary structure comprises 241 residues: Uridylate kinase (241 aa).

Position 15–18 (15–18 (KLSG)) interacts with ATP. The segment at 23–28 (GTEGFG) is involved in allosteric activation by GTP. Glycine 57 is a binding site for UMP. 2 residues coordinate ATP: glycine 58 and arginine 62. UMP contacts are provided by residues aspartate 77 and 138-145 (TGNPFFTT). ATP is bound by residues threonine 165, tyrosine 171, and aspartate 174.

It belongs to the UMP kinase family. As to quaternary structure, homohexamer.

It is found in the cytoplasm. It catalyses the reaction UMP + ATP = UDP + ADP. It functions in the pathway pyrimidine metabolism; CTP biosynthesis via de novo pathway; UDP from UMP (UMPK route): step 1/1. With respect to regulation, allosterically activated by GTP. Inhibited by UTP. Catalyzes the reversible phosphorylation of UMP to UDP. This is Uridylate kinase from Pectobacterium atrosepticum (strain SCRI 1043 / ATCC BAA-672) (Erwinia carotovora subsp. atroseptica).